Here is a 415-residue protein sequence, read N- to C-terminus: Multifunctional CCA protein (415 aa).

Residues Gly8 and Arg11 each coordinate ATP. Residues Gly8 and Arg11 each coordinate CTP. Positions 21 and 23 each coordinate Mg(2+). 3 residues coordinate ATP: Arg91, Arg137, and Arg140. 3 residues coordinate CTP: Arg91, Arg137, and Arg140. The HD domain maps to 228 to 329 (AGTHTLMALD…VELFEGLDLF (102 aa)).

It belongs to the tRNA nucleotidyltransferase/poly(A) polymerase family. Bacterial CCA-adding enzyme type 1 subfamily. Monomer. Can also form homodimers and oligomers. Requires Mg(2+) as cofactor. Ni(2+) is required as a cofactor.

It carries out the reaction a tRNA precursor + 2 CTP + ATP = a tRNA with a 3' CCA end + 3 diphosphate. The enzyme catalyses a tRNA with a 3' CCA end + 2 CTP + ATP = a tRNA with a 3' CCACCA end + 3 diphosphate. Catalyzes the addition and repair of the essential 3'-terminal CCA sequence in tRNAs without using a nucleic acid template. Adds these three nucleotides in the order of C, C, and A to the tRNA nucleotide-73, using CTP and ATP as substrates and producing inorganic pyrophosphate. tRNA 3'-terminal CCA addition is required both for tRNA processing and repair. Also involved in tRNA surveillance by mediating tandem CCA addition to generate a CCACCA at the 3' terminus of unstable tRNAs. While stable tRNAs receive only 3'-terminal CCA, unstable tRNAs are marked with CCACCA and rapidly degraded. This is Multifunctional CCA protein from Halorhodospira halophila (strain DSM 244 / SL1) (Ectothiorhodospira halophila (strain DSM 244 / SL1)).